Reading from the N-terminus, the 283-residue chain is Beta-glucoside operon antiterminator (283 aa).

2 PRD domains span residues 65–170 and 171–280; these read RIPL…SHMP and EVMR…LQEQ.

Belongs to the transcriptional antiterminator BglG family. Post-translationally, phosphorylated and inactivated by ArbF (EII-Bgl). The degree of phosphorylation is dependent on the presence or absence of beta-glucosides which act as inducers of the operon expression. Addition of inducer result in the rapid dephosphorylation of ArbG.

Its function is as follows. Mediates the positive regulation of the beta-glucoside (arb) operon by functioning as a transcriptional antiterminator. This is an RNA-binding protein that recognizes a specific sequence located just upstream of two termination sites within the operon. This chain is Beta-glucoside operon antiterminator (arbG), found in Dickeya chrysanthemi (Pectobacterium chrysanthemi).